Consider the following 355-residue polypeptide: Phosphatidylinositol:ceramide inositolphosphotransferase (355 aa).

Residues 1 to 44 (MISYPFFSLSPPGLVPPPMAVPPVEMYSGSFWNRMRKPLPLRTQ) are Cytoplasmic-facing. Residues 45 to 65 (VIRFTVVFVIVSFILAVALQI) traverse the membrane as a helical segment. At 66–89 (THERMPDPKVTKPLPDLGFELLTK) the chain is on the extracellular side. A helical transmembrane segment spans residues 90-110 (ISFLSVVTDVLIAFLSSLSFF). The Cytoplasmic segment spans residues 111-165 (TLWKLYLLHRHCVGSGEPELPCNIPGVSRFFLSVWLCKENCRIELRNVHTIAWIR). A helical transmembrane segment spans residues 166 to 186 (FITSYALLLLFRSLVIVMTSM). Residues 187–205 (PTPVDKCQNPPKIENPVKN) are Extracellular-facing. A helical membrane pass occupies residues 206-226 (VILTVLTAGGGSIHCGDLMYS). Residues 227–251 (GHTVILTLHLMFHWIYGAMVHWSFR) are Cytoplasmic-facing. Residues H228, H271, and D275 contribute to the active site. Residues 252–272 (PVVTVVAIFGYYCIVASRSHY) traverse the membrane as a helical segment. Topologically, residues 273–275 (TDD) are extracellular. The helical transmembrane segment at 276–296 (VLVAIYLTIATFIAVGHNADG) threads the bilayer. Residues 297–355 (APWQLQLFIRWLPCCGANSREVTEDSQPVMVAFKSEAVDELRERDDSAGLSCEVSTNEV) lie on the Cytoplasmic side of the membrane.

It belongs to the sphingomyelin synthase family.

Its subcellular location is the membrane. In terms of biological role, bidirectional lipid inositolphosphotransferase capable of converting phosphatidylinositol (PI) and ceramide to inositol-phosphorylceramide (IPC) and diacylglycerol (DAG) and vice versa. Direction is dependent on the relative concentrations of DAG and ceramide as phosphoinositol acceptors. Does not function strictly as a SM synthase. Essential for viability of the pathogenic bloodstream stage of this human protozoan parasite and, consequently, can be considered as potential drug target. This is Phosphatidylinositol:ceramide inositolphosphotransferase from Trypanosoma brucei brucei (strain 927/4 GUTat10.1).